The following is a 304-amino-acid chain: Ribosomal protein L11 methyltransferase (304 aa).

4 residues coordinate S-adenosyl-L-methionine: T152, G173, D195, and N234.

This sequence belongs to the methyltransferase superfamily. PrmA family.

The protein resides in the cytoplasm. The enzyme catalyses L-lysyl-[protein] + 3 S-adenosyl-L-methionine = N(6),N(6),N(6)-trimethyl-L-lysyl-[protein] + 3 S-adenosyl-L-homocysteine + 3 H(+). Its function is as follows. Methylates ribosomal protein L11. This chain is Ribosomal protein L11 methyltransferase, found in Cupriavidus metallidurans (strain ATCC 43123 / DSM 2839 / NBRC 102507 / CH34) (Ralstonia metallidurans).